The chain runs to 141 residues: Hemoglobin subunit alpha (141 aa).

One can recognise a Globin domain in the interval V1–R141. Residue S3 is modified to Phosphoserine. An N6-succinyllysine mark is found at K7 and K11. N6-acetyllysine; alternate is present on K16. K16 carries the post-translational modification N6-succinyllysine; alternate. A Phosphotyrosine modification is found at Y24. At S35 the chain carries Phosphoserine. K40 is modified (N6-succinyllysine). S49 carries the post-translational modification Phosphoserine. H58 is a binding site for O2. A heme b-binding site is contributed by H87. S102 carries the phosphoserine modification. T108 bears the Phosphothreonine mark. S124 is modified (phosphoserine). A phosphothreonine mark is found at T134 and T137. S138 bears the Phosphoserine mark.

The protein belongs to the globin family. In terms of assembly, heterotetramer of two alpha chains and two beta chains. As to expression, red blood cells.

Functionally, involved in oxygen transport from the lung to the various peripheral tissues. Its function is as follows. Hemopressin acts as an antagonist peptide of the cannabinoid receptor CNR1. Hemopressin-binding efficiently blocks cannabinoid receptor CNR1 and subsequent signaling. This Panthera tigris sumatrae (Sumatran tiger) protein is Hemoglobin subunit alpha (HBA).